A 230-amino-acid polypeptide reads, in one-letter code: 3-dehydroquinate dehydratase (230 aa).

3-dehydroquinate-binding positions include Ser26, Glu51–Arg53, and Arg84. His127 functions as the Proton donor/acceptor in the catalytic mechanism. The Schiff-base intermediate with substrate role is filled by Lys150. The 3-dehydroquinate site is built by Arg190, Thr209, and Gln213.

The protein belongs to the type-I 3-dehydroquinase family. In terms of assembly, homodimer.

The catalysed reaction is 3-dehydroquinate = 3-dehydroshikimate + H2O. The protein operates within metabolic intermediate biosynthesis; chorismate biosynthesis; chorismate from D-erythrose 4-phosphate and phosphoenolpyruvate: step 3/7. Its function is as follows. Involved in the third step of the chorismate pathway, which leads to the biosynthesis of aromatic amino acids. Catalyzes the cis-dehydration of 3-dehydroquinate (DHQ) and introduces the first double bond of the aromatic ring to yield 3-dehydroshikimate. This is 3-dehydroquinate dehydratase from Thermoplasma volcanium (strain ATCC 51530 / DSM 4299 / JCM 9571 / NBRC 15438 / GSS1).